A 106-amino-acid chain; its full sequence is UPF0449 protein C19orf25 homolog (106 aa).

This sequence belongs to the UPF0449 family.

In Xenopus tropicalis (Western clawed frog), this protein is UPF0449 protein C19orf25 homolog.